We begin with the raw amino-acid sequence, 86 residues long: Small ribosomal subunit protein bS20 (86 aa).

Residues 1–25 form a disordered region; that stretch reads MANSASSRKRARQAVKRNKHNSQIR. Residues 7 to 25 are compositionally biased toward basic residues; the sequence is SRKRARQAVKRNKHNSQIR.

The protein belongs to the bacterial ribosomal protein bS20 family.

In terms of biological role, binds directly to 16S ribosomal RNA. The polypeptide is Small ribosomal subunit protein bS20 (Vesicomyosocius okutanii subsp. Calyptogena okutanii (strain HA)).